A 103-amino-acid chain; its full sequence is Large ribosomal subunit protein bL21 (103 aa).

The protein belongs to the bacterial ribosomal protein bL21 family. Part of the 50S ribosomal subunit. Contacts protein L20.

Functionally, this protein binds to 23S rRNA in the presence of protein L20. This is Large ribosomal subunit protein bL21 from Actinobacillus pleuropneumoniae serotype 7 (strain AP76).